The sequence spans 185 residues: Peptidyl-tRNA hydrolase (185 aa).

Tyr-14 is a binding site for tRNA. His-19 functions as the Proton acceptor in the catalytic mechanism. TRNA contacts are provided by Tyr-64, Asn-66, and Asn-112.

Belongs to the PTH family. Monomer.

The protein localises to the cytoplasm. It catalyses the reaction an N-acyl-L-alpha-aminoacyl-tRNA + H2O = an N-acyl-L-amino acid + a tRNA + H(+). Functionally, hydrolyzes ribosome-free peptidyl-tRNAs (with 1 or more amino acids incorporated), which drop off the ribosome during protein synthesis, or as a result of ribosome stalling. In terms of biological role, catalyzes the release of premature peptidyl moieties from peptidyl-tRNA molecules trapped in stalled 50S ribosomal subunits, and thus maintains levels of free tRNAs and 50S ribosomes. The polypeptide is Peptidyl-tRNA hydrolase (Pediococcus pentosaceus (strain ATCC 25745 / CCUG 21536 / LMG 10740 / 183-1w)).